Here is an 843-residue protein sequence, read N- to C-terminus: Probable cleavage and polyadenylation specificity factor subunit 2 (843 aa).

Positions 414 to 425 (AEETRLRMERAR) are enriched in basic and acidic residues. Disordered regions lie at residues 414–443 (AEET…DIAA) and 691–753 (DKNR…TKGK). The segment covering 432–441 (ESDDSDDDDI) has biased composition (acidic residues). Basic and acidic residues predominate over residues 732–746 (SGKEVENGHTNDSRT).

It belongs to the metallo-beta-lactamase superfamily. RNA-metabolizing metallo-beta-lactamase-like family. CPSF2/YSH1 subfamily. CPSF is a heterotetramer composed of four distinct subunits 160, 100, 70 and 30 kDa.

The protein resides in the nucleus. Its function is as follows. CPSF plays a key role in pre-mRNA 3'-end formation, recognizing the AAUAAA signal sequence and interacting with poly(A)polymerase and other factors to bring about cleavage and poly(A) addition. This Caenorhabditis elegans protein is Probable cleavage and polyadenylation specificity factor subunit 2 (cpsf-2).